The sequence spans 643 residues: Cell pattern formation-associated protein asm-1 (643 aa).

The segment at 1–37 is disordered; that stretch reads MNPNTPADVYYGQMSQGSSMPVTTVPSHSHYASQQPP. Residues 13–33 show a composition bias toward polar residues; it reads QMSQGSSMPVTTVPSHSHYAS. The region spanning 116–222 is the HTH APSES-type domain; the sequence is RVTATLWEDE…HNIGALLYHP (107 aa). Residues 150–171 constitute a DNA-binding region (H-T-H motif); it reads GTKLLNVAGMTRGRRDGILKSE. Residues 229–627 form a disordered region; it reads SQVMAAAEQR…GSLPSPTYTA (399 aa). Residues 306–335 show a composition bias toward polar residues; sequence DGYQWSQQSMSGTQGNSSLSLDTSLGSNAR. Over residues 336 to 349 the composition is skewed to low complexity; that stretch reads SMPSTPATTPPGST. Residues 350–367 are compositionally biased toward polar residues; sequence IQSMQNYPPVSQSYESSR. Residues 368–391 show a composition bias toward low complexity; the sequence is QMYQGQSAQQAQYQSQQHYSSQPQ. Composition is skewed to polar residues over residues 471–481, 529–551, and 563–577; these read GSYNYNTQAVN, QPSS…TQGN, and SLPN…VMNG. The tract at residues 583-612 is nuclear localization domain; it reads KRGRDDDDDGGRPTTSAPNLGPGMDMKRRK.

Belongs to the EFG1/PHD1/stuA family.

It is found in the nucleus. Functionally, transcription factor that regulates asexual reproduction. Binds the StuA-response elements (StRE) with the consensus sequence 5'-(A/T)CGCG(T/A)N(A/C)-3' at the promoters of target genes. Required for rapid conidial germination, normal vegetative morphology, and protoperithecium formation. The sequence is that of Cell pattern formation-associated protein asm-1 from Neurospora crassa (strain ATCC 24698 / 74-OR23-1A / CBS 708.71 / DSM 1257 / FGSC 987).